Here is a 483-residue protein sequence, read N- to C-terminus: Protein adenylyltransferase Fic (483 aa).

The chain crosses the membrane as a helical span at residues 20–42; the sequence is AFFFIAGSLATFVFHALTSSSSV. TPR repeat units follow at residues 107–140 and 141–175; these read ALGA…APKH and PEVL…SPSN. Positions 232-237 match the Inhibitory (S/T)XXXE(G/N) motif motif; it reads SVGIEG. ATP contacts are provided by residues E236 and 317–320; that span reads VGGH. Residues 286 to 421 enclose the Fido domain; it reads ITLKDILELH…IRPFVRFIAD (136 aa). The active site involves H364. ATP is bound by residues 368–375, 400–401, and N408; these read DGNGRTSR and YY. Residues 464 to 483 are disordered; sequence SAPEPYESGSGLDSGVNGMP.

This sequence belongs to the fic family. As to quaternary structure, homodimer.

It is found in the membrane. It catalyses the reaction L-tyrosyl-[protein] + ATP = O-(5'-adenylyl)-L-tyrosyl-[protein] + diphosphate. It carries out the reaction L-threonyl-[protein] + ATP = 3-O-(5'-adenylyl)-L-threonyl-[protein] + diphosphate. The catalysed reaction is 3-O-(5'-adenylyl)-L-threonyl-[protein] + H2O = L-threonyl-[protein] + AMP + H(+). The side chain of Glu-236 determines which of the two opposing activities (AMPylase or de-AMPylase) will take place. In response to endoplasmic reticulum stress, mediates de-AMPylase activity. Adenylyltransferase activity is inhibited by the inhibitory helix present at the N-terminus: Glu-236 binds ATP and competes with ATP-binding at Arg-375, thereby preventing adenylyltransferase activity. In unstressed cells, disengagement of Glu-236 promotes adenylyltransferase activity. Activation dissociates ATP-binding from Glu-236, allowing ordered binding of the entire ATP moiety with the alpha-phosphate in an orientation that is productive for accepting an incoming target hydroxyl side chain. In terms of biological role, protein that can both mediate the addition of adenosine 5'-monophosphate (AMP) to specific residues of target proteins (AMPylation), and the removal of the same modification from target proteins (de-AMPylation), depending on the context. The side chain of Glu-236 determines which of the two opposing activities (AMPylase or de-AMPylase) will take place. Acts as a key regulator of the unfolded protein response (UPR) by mediating AMPylation or de-AMPylation of Hsc70-3/BiP. In unstressed cells, acts as an adenylyltransferase by mediating AMPylation of Hsc70-3/BiP at 'Thr-518', thereby inactivating it. In response to endoplasmic reticulum stress, acts as a phosphodiesterase by mediating removal of ATP (de-AMPylation) from Hsc70-3/BiP at 'Thr-518', leading to restore HSPA5/BiP activity. The protein is Protein adenylyltransferase Fic of Drosophila grimshawi (Hawaiian fruit fly).